Consider the following 82-residue polypeptide: Acyl carrier protein (82 aa).

The Carrier domain occupies 2–77 (DNVADRVKKV…QAIDYVSAHI (76 aa)). Ser-37 is subject to O-(pantetheine 4'-phosphoryl)serine.

This sequence belongs to the acyl carrier protein (ACP) family. Post-translationally, 4'-phosphopantetheine is transferred from CoA to a specific serine of apo-ACP by AcpS. This modification is essential for activity because fatty acids are bound in thioester linkage to the sulfhydryl of the prosthetic group.

The protein resides in the cytoplasm. It participates in lipid metabolism; fatty acid biosynthesis. In terms of biological role, carrier of the growing fatty acid chain in fatty acid biosynthesis. The polypeptide is Acyl carrier protein (Acidithiobacillus ferrooxidans (strain ATCC 23270 / DSM 14882 / CIP 104768 / NCIMB 8455) (Ferrobacillus ferrooxidans (strain ATCC 23270))).